Reading from the N-terminus, the 390-residue chain is Leu/Ile/Val-binding protein homolog 6 (390 aa).

Residues 1–21 form the signal peptide; it reads MKKIALTALAVFSLAASAAYA.

It belongs to the leucine-binding protein family.

Component of an amino-acid transport system. This Brucella suis biovar 1 (strain 1330) protein is Leu/Ile/Val-binding protein homolog 6.